Here is a 258-residue protein sequence, read N- to C-terminus: Cell division protein FtsQ (258 aa).

Over 1–29 (MAKNAPAPRGARRKPVKKVGVPLRERVAT) the chain is Cytoplasmic. The chain crosses the membrane as a helical span at residues 30 to 50 (AVPWMLVGSVAMVSLLAVIYL). The Periplasmic segment spans residues 51–258 (PAALDGYPIR…MAVTWREQQS (208 aa)). The POTRA domain occupies 57 to 127 (YPIRKVGVDG…DTVVLTVEER (71 aa)).

It belongs to the FtsQ/DivIB family. FtsQ subfamily. As to quaternary structure, part of a complex composed of FtsB, FtsL and FtsQ.

Its subcellular location is the cell inner membrane. In terms of biological role, essential cell division protein. May link together the upstream cell division proteins, which are predominantly cytoplasmic, with the downstream cell division proteins, which are predominantly periplasmic. May control correct divisome assembly. The sequence is that of Cell division protein FtsQ from Alcanivorax borkumensis (strain ATCC 700651 / DSM 11573 / NCIMB 13689 / SK2).